A 427-amino-acid chain; its full sequence is UPF0597 protein CPR_0790 (427 aa).

It belongs to the UPF0597 family.

The polypeptide is UPF0597 protein CPR_0790 (Clostridium perfringens (strain SM101 / Type A)).